Here is a 346-residue protein sequence, read N- to C-terminus: Phosphoribosylformylglycinamidine cyclo-ligase (346 aa).

The protein belongs to the AIR synthase family.

The protein resides in the cytoplasm. The catalysed reaction is 2-formamido-N(1)-(5-O-phospho-beta-D-ribosyl)acetamidine + ATP = 5-amino-1-(5-phospho-beta-D-ribosyl)imidazole + ADP + phosphate + H(+). It functions in the pathway purine metabolism; IMP biosynthesis via de novo pathway; 5-amino-1-(5-phospho-D-ribosyl)imidazole from N(2)-formyl-N(1)-(5-phospho-D-ribosyl)glycinamide: step 2/2. The sequence is that of Phosphoribosylformylglycinamidine cyclo-ligase from Brevibacillus brevis (strain 47 / JCM 6285 / NBRC 100599).